Reading from the N-terminus, the 218-residue chain is Octanoyltransferase (218 aa).

The BPL/LPL catalytic domain occupies 27-210 (TGGEDTLYLV…QFLAIFTHPA (184 aa)). Residues 72-79 (RGGNITCH), 139-141 (SIG), and 152-154 (GLA) each bind substrate. The active-site Acyl-thioester intermediate is C170.

The protein belongs to the LipB family.

It localises to the cytoplasm. The catalysed reaction is octanoyl-[ACP] + L-lysyl-[protein] = N(6)-octanoyl-L-lysyl-[protein] + holo-[ACP] + H(+). Its pathway is protein modification; protein lipoylation via endogenous pathway; protein N(6)-(lipoyl)lysine from octanoyl-[acyl-carrier-protein]: step 1/2. In terms of biological role, catalyzes the transfer of endogenously produced octanoic acid from octanoyl-acyl-carrier-protein onto the lipoyl domains of lipoate-dependent enzymes. Lipoyl-ACP can also act as a substrate although octanoyl-ACP is likely to be the physiological substrate. This chain is Octanoyltransferase, found in Nitratidesulfovibrio vulgaris (strain ATCC 29579 / DSM 644 / CCUG 34227 / NCIMB 8303 / VKM B-1760 / Hildenborough) (Desulfovibrio vulgaris).